The sequence spans 99 residues: Aspartyl/glutamyl-tRNA(Asn/Gln) amidotransferase subunit C (99 aa).

The protein belongs to the GatC family. Heterotrimer of A, B and C subunits.

It catalyses the reaction L-glutamyl-tRNA(Gln) + L-glutamine + ATP + H2O = L-glutaminyl-tRNA(Gln) + L-glutamate + ADP + phosphate + H(+). It carries out the reaction L-aspartyl-tRNA(Asn) + L-glutamine + ATP + H2O = L-asparaginyl-tRNA(Asn) + L-glutamate + ADP + phosphate + 2 H(+). Its function is as follows. Allows the formation of correctly charged Asn-tRNA(Asn) or Gln-tRNA(Gln) through the transamidation of misacylated Asp-tRNA(Asn) or Glu-tRNA(Gln) in organisms which lack either or both of asparaginyl-tRNA or glutaminyl-tRNA synthetases. The reaction takes place in the presence of glutamine and ATP through an activated phospho-Asp-tRNA(Asn) or phospho-Glu-tRNA(Gln). This chain is Aspartyl/glutamyl-tRNA(Asn/Gln) amidotransferase subunit C, found in Variovorax paradoxus (strain S110).